The following is a 317-amino-acid chain: Large ribosomal subunit protein uL10 (317 aa).

The tract at residues 286–317 (AGAGAAAEKKEEAKKEESESEEDDDMGFGLFD) is disordered. Residues 292–302 (AEKKEEAKKEE) show a composition bias toward basic and acidic residues.

This sequence belongs to the universal ribosomal protein uL10 family. P0 forms a pentameric complex by interaction with dimers of P1 and P2. Post-translationally, phosphorylated.

Its function is as follows. Ribosomal protein P0 is the functional equivalent of E.coli protein L10. The sequence is that of Large ribosomal subunit protein uL10 (RpLP0) from Ceratitis capitata (Mediterranean fruit fly).